The primary structure comprises 289 residues: Energy-coupling factor transporter ATP-binding protein EcfA2 (289 aa).

The 243-residue stretch at 3-245 (IEFKNVDYVY…QEWVKKHYLD (243 aa)) folds into the ABC transporter domain. Position 40–47 (40–47 (GHTGSGKS)) interacts with ATP.

Belongs to the ABC transporter superfamily. Energy-coupling factor EcfA family. Forms a stable energy-coupling factor (ECF) transporter complex composed of 2 membrane-embedded substrate-binding proteins (S component), 2 ATP-binding proteins (A component) and 2 transmembrane proteins (T component).

It is found in the cell membrane. ATP-binding (A) component of a common energy-coupling factor (ECF) ABC-transporter complex. Unlike classic ABC transporters this ECF transporter provides the energy necessary to transport a number of different substrates. In Lactobacillus johnsonii (strain CNCM I-12250 / La1 / NCC 533), this protein is Energy-coupling factor transporter ATP-binding protein EcfA2.